The sequence spans 302 residues: Glutaminase (302 aa).

Ser61, Asn111, Glu155, Asn162, Tyr186, Tyr238, and Val256 together coordinate substrate.

Belongs to the glutaminase family. Homotetramer.

It carries out the reaction L-glutamine + H2O = L-glutamate + NH4(+). This Pseudomonas fluorescens (strain ATCC BAA-477 / NRRL B-23932 / Pf-5) protein is Glutaminase.